Reading from the N-terminus, the 346-residue chain is Annexin A1 (346 aa).

Ala-2 carries the N-acetylalanine modification. At Ser-5 the chain carries Phosphoserine; by TRPM7. Gln-19 participates in a covalent cross-link: Isoglutamyl lysine isopeptide (Gln-Lys) (interchain with K-?). Position 21 is a phosphotyrosine (Tyr-21). Ser-27 carries the post-translational modification Phosphoserine; by PKC. Phosphoserine is present on residues Ser-34 and Ser-37. Annexin repeat units lie at residues 42–113, 114–185, 197–269, and 273–344; these read FNVS…AMLK, TPAQ…ALAK, DLAD…TIVK, and STPA…ALCG. The residue at position 58 (Lys-58) is an N6-acetyllysine. Ca(2+)-binding residues include Gly-59, Val-60, Glu-62, Arg-97, Leu-100, Glu-105, Met-127, Gly-129, Gly-131, Thr-132, and Glu-134. Thr-136 is modified (phosphothreonine). 3 residues coordinate Ca(2+): Asp-171, Gly-210, and Arg-213. A Glycyl lysine isopeptide (Lys-Gly) (interchain with G-Cter in SUMO1); alternate cross-link involves residue Lys-214. Residue Lys-214 forms a Glycyl lysine isopeptide (Lys-Gly) (interchain with G-Cter in SUMO2); alternate linkage. The Ca(2+) site is built by Gly-215, Asp-253, Glu-255, and Leu-256. Lys-257 is covalently cross-linked (Glycyl lysine isopeptide (Lys-Gly) (interchain with G-Cter in SUMO1)). Ca(2+) contacts are provided by Glu-261, Met-286, Gly-288, and Gly-290. Residue Lys-312 is modified to N6-acetyllysine. Cysteines 324 and 343 form a disulfide. Ca(2+) is bound by residues Leu-328, Glu-330, and Thr-331. A Glycyl lysine isopeptide (Lys-Gly) (interchain with G-Cter in SUMO1) cross-link involves residue Lys-332. Glu-336 is a binding site for Ca(2+).

The protein belongs to the annexin family. In terms of assembly, homodimer; non-covalently linked. Homodimer; linked by transglutamylation. Homodimers linked by transglutamylation are observed in placenta, but not in other tissues. Interacts with S100A11. Heterotetramer, formed by two molecules each of S100A11 and ANXA1. Interacts with DYSF. Interacts with EGFR. Post-translationally, phosphorylated by protein kinase C, EGFR and TRPM7. Phosphorylated in response to EGF treatment. Sumoylated. In terms of processing, proteolytically cleaved by cathepsin CTSG to release the active N-terminal peptide Ac2-26. Detected in lung. Detected at the apical membrane of airway epithelial cells. Detected in intestinal epithelial cells. Detected in skeletal muscle. Detected in prostate. Detected in thymus (at protein level). Detected in stomach, lung, spleen, ovary and uterus, and at lower levels in kidney, thymus and heart.

Its subcellular location is the nucleus. The protein resides in the cytoplasm. It is found in the cell projection. The protein localises to the cilium. It localises to the basolateral cell membrane. Its subcellular location is the lateral cell membrane. The protein resides in the cell membrane. It is found in the apical cell membrane. The protein localises to the membrane. It localises to the early endosome. Its subcellular location is the cytoplasmic vesicle membrane. The protein resides in the endosome membrane. It is found in the secreted. The protein localises to the extracellular space. It localises to the extracellular exosome. Its subcellular location is the cytoplasmic vesicle. The protein resides in the secretory vesicle lumen. It is found in the phagocytic cup. In terms of biological role, plays important roles in the innate immune response as effector of glucocorticoid-mediated responses and regulator of the inflammatory process. Has anti-inflammatory activity. Plays a role in glucocorticoid-mediated down-regulation of the early phase of the inflammatory response. Contributes to the adaptive immune response by enhancing signaling cascades that are triggered by T-cell activation, regulates differentiation and proliferation of activated T-cells. Promotes the differentiation of T-cells into Th1 cells and negatively regulates differentiation into Th2 cells. Has no effect on unstimulated T-cells. Negatively regulates hormone exocytosis via activation of the formyl peptide receptors and reorganization of the actin cytoskeleton. Has high affinity for Ca(2+) and can bind up to eight Ca(2+) ions. Displays Ca(2+)-dependent binding to phospholipid membranes. Plays a role in the formation of phagocytic cups and phagosomes. Plays a role in phagocytosis by mediating the Ca(2+)-dependent interaction between phagosomes and the actin cytoskeleton. Functionally, functions at least in part by activating the formyl peptide receptors and downstream signaling cascades. Promotes chemotaxis of granulocytes and monocytes via activation of the formyl peptide receptors. Promotes rearrangement of the actin cytoskeleton, cell polarization and cell migration. Promotes resolution of inflammation and wound healing. Acts via neutrophil N-formyl peptide receptors to enhance the release of CXCL2. In Mus musculus (Mouse), this protein is Annexin A1 (Anxa1).